Consider the following 423-residue polypeptide: MALRVTRNTKINTENKAKVSMAGAKRVPVAVAASKPLLRSRTALGDIGNKVSEQSRIPLKKETKKLGSGTVTVKALPKPVDKVPVCEPEVELDEPEPEPVMEVKHSPEPILVDTPSPSPMETSGCAPAEEYLCQAFSDVILAVSDVDADDGGDPNLCSEYVKDIYAYLRQLEEEQSVRPKYLLGREVTGNMRAILIDWLIQVQMKFRLLQETMYMTVSIIDRFMQDSCVPKKMLQLVGVTAMFIASKYEEMYPPEIGDFAFVTNNTYTKHQIRQMEMKILRVLNFSLGRPLPLHFLRRASKIGEVDVEQHTLAKYLMELSMLDYDMVHFAPSQIAAGAFCLALKILDNGEWTPTLQHYLSHTEESLLPVMQHLAKNIVMVNRGLTKHMTIKNKYATSKHAKISTLAQLNCTLVQNLSKAVTKA.

The residue at position 116 (S116) is a Phosphoserine; by CDK1. A Phosphoserine modification is found at S118. S123 is subject to Phosphoserine; by PLK1. S137 is subject to Phosphoserine. Interaction with CDK2 stretches follow at residues 159-167 (EYVKDIYAY) and 248-251 (YEEM). At T311 the chain carries Phosphothreonine.

Belongs to the cyclin family. Cyclin AB subfamily. In terms of assembly, interacts with the CDC2 protein kinase to form a serine/threonine kinase holoenzyme complex also known as maturation promoting factor (MPF). The cyclin subunit imparts substrate specificity to the complex. Binds HEI10. Interacts with catalytically active RALBP1 and CDC2 during mitosis to form an endocytotic complex during interphase. Interacts with CCNF; interaction is required for nuclear localization. Interacts with CDK5RAP3. Interacts with RFPL4A and UBE2A. Interacts with INCA1. Ubiquitinated by the SCF(NIPA) complex during interphase, leading to its destruction. Deubiquitinated by USP22 during G2/M phase. In terms of processing, phosphorylated by PLK1 at Ser-123 on centrosomes during prophase: phosphorylation by PLK1 does not cause nuclear import. Phosphorylation at Ser-137 was also reported to be mediated by PLK1 but Ser-123 seems to be the primary phosphorylation site.

It is found in the cytoplasm. The protein localises to the nucleus. Its subcellular location is the cytoskeleton. It localises to the microtubule organizing center. The protein resides in the centrosome. Its function is as follows. Essential for the control of the cell cycle at the G2/M (mitosis) transition. The chain is G2/mitotic-specific cyclin-B1 (Ccnb1) from Rattus norvegicus (Rat).